A 484-amino-acid polypeptide reads, in one-letter code: Aspartyl aminopeptidase (484 aa).

Met1 carries the N-acetylmethionine modification. Residue His84 coordinates Zn(2+). Position 159 (His159) interacts with substrate. Residues 188 to 206 show a composition bias toward low complexity; it reads PVESKSTTTTTTTESPKTS. Residues 188 to 213 are disordered; sequence PVESKSTTTTTTTESPKTSDPQDVNS. Asp266 contributes to the Zn(2+) binding site. Glu301 serves as a coordination point for substrate. The Zn(2+) site is built by Glu302 and Asp354. 4 residues coordinate substrate: Asp354, His357, Lys382, and Tyr389. His448 contributes to the Zn(2+) binding site.

It belongs to the peptidase M18 family. In terms of assembly, tetrahedron-shaped homododecamer built from six homodimers. The cofactor is Zn(2+).

It localises to the cytoplasm. The enzyme catalyses Release of an N-terminal aspartate or glutamate from a peptide, with a preference for aspartate.. Its function is as follows. Likely to play an important role in intracellular protein and peptide metabolism. The polypeptide is Aspartyl aminopeptidase (dnpep) (Dictyostelium discoideum (Social amoeba)).